We begin with the raw amino-acid sequence, 240 residues long: Sec-independent protein translocase protein TatC (240 aa).

6 consecutive transmembrane segments (helical) span residues 15–35, 61–81, 103–123, 152–172, 191–211, and 212–232; these read IISI…AKYV, LFIL…PVIL, LLLG…FIVL, FVLK…VLYV, FIVI…TQVL, and MAIP…LATR.

Belongs to the TatC family. Forms a complex with TatA.

The protein localises to the cell inner membrane. In terms of biological role, part of the twin-arginine translocation (Tat) system that transports large folded proteins containing a characteristic twin-arginine motif in their signal peptide across membranes. The protein is Sec-independent protein translocase protein TatC of Aquifex aeolicus (strain VF5).